The primary structure comprises 276 residues: 2,3,4,5-tetrahydropyridine-2,6-dicarboxylate N-succinyltransferase (276 aa).

Residues R104 and D141 each contribute to the substrate site.

Belongs to the transferase hexapeptide repeat family. Homotrimer.

The protein resides in the cytoplasm. The catalysed reaction is (S)-2,3,4,5-tetrahydrodipicolinate + succinyl-CoA + H2O = (S)-2-succinylamino-6-oxoheptanedioate + CoA. It functions in the pathway amino-acid biosynthesis; L-lysine biosynthesis via DAP pathway; LL-2,6-diaminopimelate from (S)-tetrahydrodipicolinate (succinylase route): step 1/3. The protein is 2,3,4,5-tetrahydropyridine-2,6-dicarboxylate N-succinyltransferase of Legionella pneumophila (strain Corby).